The sequence spans 451 residues: Aspartate aminotransferase, mitochondrial (451 aa).

The L-aspartate site is built by Gly-52, Trp-155, and Asn-216. Lys-286 carries the N6-(pyridoxal phosphate)lysine modification. Arg-423 is an L-aspartate binding site.

This sequence belongs to the class-I pyridoxal-phosphate-dependent aminotransferase family. As to quaternary structure, homodimer. Requires pyridoxal 5'-phosphate as cofactor.

Its subcellular location is the mitochondrion matrix. The enzyme catalyses L-aspartate + 2-oxoglutarate = oxaloacetate + L-glutamate. Plays a key role in amino acid metabolism. Important for metabolite exchange between mitochondria and cytosol. The polypeptide is Aspartate aminotransferase, mitochondrial (AAT1) (Saccharomyces cerevisiae (strain ATCC 204508 / S288c) (Baker's yeast)).